The following is a 172-amino-acid chain: 16S rRNA aminocarboxypropyltransferase (172 aa).

S-adenosyl-L-methionine contacts are provided by T21, L71, L93, and T112.

It belongs to the TDD superfamily. TSR3 family.

The protein resides in the cytoplasm. The catalysed reaction is an N(1)-methylpseudouridine in rRNA + S-adenosyl-L-methionine = N(1)-methyl-N(3)-[(3S)-3-amino-3-carboxypropyl]pseudouridine in rRNA + S-methyl-5'-thioadenosine + H(+). Functionally, aminocarboxypropyltransferase that catalyzes the aminocarboxypropyl transfer on pseudouridine at position 914 in 16S rRNA. It constitutes the last step in biosynthesis of the hypermodified N1-methyl-N3-(3-amino-3-carboxypropyl) pseudouridine (m1acp3-Psi). The protein is 16S rRNA aminocarboxypropyltransferase of Methanocaldococcus jannaschii (strain ATCC 43067 / DSM 2661 / JAL-1 / JCM 10045 / NBRC 100440) (Methanococcus jannaschii).